A 66-amino-acid chain; its full sequence is Protein translocase subunit SecE (66 aa).

Residues 34-54 (LVVIVAVFVFSLICLVLDYGI) traverse the membrane as a helical segment.

Belongs to the SecE/SEC61-gamma family. In terms of assembly, component of the Sec protein translocase complex. Heterotrimer consisting of SecY, SecE and SecG subunits. The heterotrimers can form oligomers, although 1 heterotrimer is thought to be able to translocate proteins. Interacts with the ribosome. Interacts with SecDF, and other proteins may be involved. Interacts with SecA.

The protein localises to the cell inner membrane. Essential subunit of the Sec protein translocation channel SecYEG. Clamps together the 2 halves of SecY. May contact the channel plug during translocation. In Rickettsia bellii (strain RML369-C), this protein is Protein translocase subunit SecE.